The sequence spans 579 residues: UPF0324 membrane protein DVU_0943 (579 aa).

10 consecutive transmembrane segments (helical) span residues 26-45, 193-215, 225-243, 250-272, 305-327, 369-391, 430-452, 473-495, 515-533, and 546-568; these read YWAI…LFLA, AFNI…AIGM, FLVG…QMMG, YWGI…TVGT, IGIP…TFIF, LTLS…PAFI, AATI…AVYW, FPKF…GSLG, LRGW…ATNF, and LILY…YIMF.

Belongs to the UPF0324 family.

The protein resides in the cell membrane. The protein is UPF0324 membrane protein DVU_0943 of Nitratidesulfovibrio vulgaris (strain ATCC 29579 / DSM 644 / CCUG 34227 / NCIMB 8303 / VKM B-1760 / Hildenborough) (Desulfovibrio vulgaris).